Consider the following 284-residue polypeptide: MNKQQLKAYFMLMRLHRPIPILLILWPTLTALVLASHGLPDISYLVIFTIGVVVMRTVGCIINDIADVDFDKHVARTNTRPLTSGQLSIKNAIWLCISLTLVAFICVLFLNLYTILLSFVALFLAILYPFCKRFFAIPQLILGLAFNFGIFMAFSAIQNQIPVEAWIFYLATICWTIAYDTIYALADREFDLEIGIKSSAVLFGNKVFRYILLFNFLSLLLLIILGIYCDFNSFFYLGVVICSLFFVRNYFLYKKLGITNCINAFSANHWIGLIIFIMAVIQYI.

A run of 9 helical transmembrane segments spans residues 19–39, 42–62, 85–105, 107–127, 134–154, 165–185, 211–231, 233–253, and 261–281; these read IPIL…SHGL, ISYL…GCII, GQLS…VAFI, VLFL…LAIL, FFAI…FMAF, AWIF…IYAL, ILLF…YCDF, SFFY…YFLY, and CINA…MAVI.

Belongs to the UbiA prenyltransferase family. It depends on Mg(2+) as a cofactor.

It localises to the cell inner membrane. The catalysed reaction is all-trans-octaprenyl diphosphate + 4-hydroxybenzoate = 4-hydroxy-3-(all-trans-octaprenyl)benzoate + diphosphate. It participates in cofactor biosynthesis; ubiquinone biosynthesis. In terms of biological role, catalyzes the prenylation of para-hydroxybenzoate (PHB) with an all-trans polyprenyl group. Mediates the second step in the final reaction sequence of ubiquinone-8 (UQ-8) biosynthesis, which is the condensation of the polyisoprenoid side chain with PHB, generating the first membrane-bound Q intermediate 3-octaprenyl-4-hydroxybenzoate. This is 4-hydroxybenzoate octaprenyltransferase from Francisella tularensis subsp. novicida (strain U112).